The chain runs to 75 residues: Cytochrome c oxidase subunit 6C (75 aa).

Residues methionine 1–glycine 13 lie on the Mitochondrial matrix side of the membrane. A helical transmembrane segment spans residues leucine 14–arginine 54. Residues asparagine 55–lysine 75 are Mitochondrial intermembrane-facing.

The protein belongs to the cytochrome c oxidase subunit 6c family. As to quaternary structure, component of the cytochrome c oxidase (complex IV, CIV), a multisubunit enzyme composed of 14 subunits. The complex is composed of a catalytic core of 3 subunits MT-CO1, MT-CO2 and MT-CO3, encoded in the mitochondrial DNA, and 11 supernumerary subunits COX4I, COX5A, COX5B, COX6A, COX6B, COX6C, COX7A, COX7B, COX7C, COX8 and NDUFA4, which are encoded in the nuclear genome. The complex exists as a monomer or a dimer and forms supercomplexes (SCs) in the inner mitochondrial membrane with NADH-ubiquinone oxidoreductase (complex I, CI) and ubiquinol-cytochrome c oxidoreductase (cytochrome b-c1 complex, complex III, CIII), resulting in different assemblies (supercomplex SCI(1)III(2)IV(1) and megacomplex MCI(2)III(2)IV(2)).

It is found in the mitochondrion inner membrane. Its pathway is energy metabolism; oxidative phosphorylation. In terms of biological role, component of the cytochrome c oxidase, the last enzyme in the mitochondrial electron transport chain which drives oxidative phosphorylation. The respiratory chain contains 3 multisubunit complexes succinate dehydrogenase (complex II, CII), ubiquinol-cytochrome c oxidoreductase (cytochrome b-c1 complex, complex III, CIII) and cytochrome c oxidase (complex IV, CIV), that cooperate to transfer electrons derived from NADH and succinate to molecular oxygen, creating an electrochemical gradient over the inner membrane that drives transmembrane transport and the ATP synthase. Cytochrome c oxidase is the component of the respiratory chain that catalyzes the reduction of oxygen to water. Electrons originating from reduced cytochrome c in the intermembrane space (IMS) are transferred via the dinuclear copper A center (CU(A)) of subunit 2 and heme A of subunit 1 to the active site in subunit 1, a binuclear center (BNC) formed by heme A3 and copper B (CU(B)). The BNC reduces molecular oxygen to 2 water molecules using 4 electrons from cytochrome c in the IMS and 4 protons from the mitochondrial matrix. The protein is Cytochrome c oxidase subunit 6C (COX6C) of Macaca silenus (Lion-tailed macaque).